The chain runs to 149 residues: Transcriptional repressor NrdR (149 aa).

A zinc finger spans residues cysteine 3–cysteine 34. The ATP-cone domain maps to isoleucine 49–threonine 139.

Belongs to the NrdR family. Zn(2+) serves as cofactor.

Negatively regulates transcription of bacterial ribonucleotide reductase nrd genes and operons by binding to NrdR-boxes. The polypeptide is Transcriptional repressor NrdR (Clostridium perfringens (strain SM101 / Type A)).